The primary structure comprises 273 residues: NH(3)-dependent NAD(+) synthetase (273 aa).

Gly47–Ser54 lines the ATP pocket. Mg(2+) is bound at residue Asp53. Deamido-NAD(+) is bound at residue Arg139. Thr159 serves as a coordination point for ATP. Glu164 lines the Mg(2+) pocket. Lys172 and Asp179 together coordinate deamido-NAD(+). Lys188 and Thr210 together coordinate ATP. Residue His259–Lys260 coordinates deamido-NAD(+).

This sequence belongs to the NAD synthetase family. In terms of assembly, homodimer.

The catalysed reaction is deamido-NAD(+) + NH4(+) + ATP = AMP + diphosphate + NAD(+) + H(+). The protein operates within cofactor biosynthesis; NAD(+) biosynthesis; NAD(+) from deamido-NAD(+) (ammonia route): step 1/1. Functionally, catalyzes the ATP-dependent amidation of deamido-NAD to form NAD. Uses ammonia as a nitrogen source. This is NH(3)-dependent NAD(+) synthetase from Staphylococcus aureus (strain bovine RF122 / ET3-1).